A 150-amino-acid polypeptide reads, in one-letter code: Large ribosomal subunit protein bL9 (150 aa).

It belongs to the bacterial ribosomal protein bL9 family.

Functionally, binds to the 23S rRNA. The sequence is that of Large ribosomal subunit protein bL9 from Polynucleobacter necessarius subsp. necessarius (strain STIR1).